A 441-amino-acid polypeptide reads, in one-letter code: Zinc finger protein ZIC 3 (441 aa).

The segment at 222–257 adopts a C2H2-type 1; atypical zinc-finger fold; it reads LSCKWLEESPMNRPQKTCDRTFSSMHELVTHMTMEH. The C2H2-type 2; atypical zinc finger occupies 266–293; that stretch reads HICYWEECPRGGKSFKAKYKLVNHIRVH. 3 C2H2-type zinc fingers span residues 299 to 323, 329 to 353, and 359 to 381; these read FPCP…KRTH, FKCE…MHVH, and YICK…MKVH. Residues 375 to 441 are disordered; it reads RKHMKVHESQ…LPPNFNEWYV (67 aa). Over residues 383 to 399 the composition is skewed to low complexity; that stretch reads SQGSDSSPAASSGYESA. A compositionally biased stretch (polar residues) spans 406–429; it reads SANSEEPSKNSSATHQTNNSSHNT.

Belongs to the GLI C2H2-type zinc-finger protein family.

The protein localises to the nucleus. Its subcellular location is the cytoplasm. In terms of biological role, probably acts as a transcriptional activator. May bind to the minimal GLI-consensus sequence 5'-GGGTGGTC-3'. Can determine the ectodermal cell fate and promote the earliest step of neural and neural crest development. Involved in establishing left-right asymmetry in the embryo. The polypeptide is Zinc finger protein ZIC 3 (zic3) (Xenopus tropicalis (Western clawed frog)).